Here is a 229-residue protein sequence, read N- to C-terminus: Large ribosomal subunit protein uL1 (229 aa).

This sequence belongs to the universal ribosomal protein uL1 family. As to quaternary structure, part of the 50S ribosomal subunit.

In terms of biological role, binds directly to 23S rRNA. The L1 stalk is quite mobile in the ribosome, and is involved in E site tRNA release. Functionally, protein L1 is also a translational repressor protein, it controls the translation of the L11 operon by binding to its mRNA. This chain is Large ribosomal subunit protein uL1, found in Staphylococcus aureus (strain MRSA252).